The chain runs to 301 residues: Putative carboxypeptidase slr1534 (301 aa).

The Nucleophile role is filled by Ser116. Active-site charge relay system residues include Glu206 and His276.

The protein belongs to the peptidase S66 family.

This is Putative carboxypeptidase slr1534 from Synechocystis sp. (strain ATCC 27184 / PCC 6803 / Kazusa).